The primary structure comprises 239 residues: Guanylate kinase (239 aa).

In terms of domain architecture, Guanylate kinase-like spans 19–197 (GLLIVVTGAS…AVSELLAVQQ (179 aa)). 26–33 (GASGVGKG) contacts ATP.

Belongs to the guanylate kinase family.

It is found in the cytoplasm. The enzyme catalyses GMP + ATP = GDP + ADP. In terms of biological role, essential for recycling GMP and indirectly, cGMP. This is Guanylate kinase (gmk) from Deinococcus radiodurans (strain ATCC 13939 / DSM 20539 / JCM 16871 / CCUG 27074 / LMG 4051 / NBRC 15346 / NCIMB 9279 / VKM B-1422 / R1).